Reading from the N-terminus, the 488-residue chain is MFAAGLAPFYASNFSLWSAAYCSSAGPGGCSFPLDPAAVKKPSFCIADILHAGVGDLGAAPEGLAGASAAALTAHLGSVHPHASFQAAARSPLRPTPVVAPSEVPAGFPQRLSPLSAAYHHHHPQQQQQQQQPQQQQPPPPPRAGALQPPASGTRVVPNPHHSGSAPAPSSKDLKFGIDRILSAEFDPKVKEGNTLRDLTSLLTGGRPAGVHLSGLQPSAGQFFASLDPINEASAILSPLNSNPRNSVQHQFQDTFPGPYAVLTKDTMPQTYKRKRSWSRAVFSNLQRKGLEKRFEIQKYVTKPDRKQLAAMLGLTDAQVKVWFQNRRMKWRHSKEAQAQKDKDKEAGEKPSGGAPAADGEQDERSPSRSEGEAESESSDSESLDMAPSDTERTEGSERSLHQTTVIKAPVTGALITASSAGSGGSSGGGGNSFSFSSASSLSSSSTSAGCASSLGGGGASELLPATQPTASSAPKSPEPAQGALGCL.

2 disordered regions span residues 118 to 173 and 331 to 488; these read AYHH…SSKD and WRHS…LGCL. Composition is skewed to low complexity over residues 125–135 and 158–171; these read QQQQQQQQPQQ and PNPH…APSS. The segment at residues 276–335 is a DNA-binding region (homeobox); it reads RSWSRAVFSNLQRKGLEKRFEIQKYVTKPDRKQLAAMLGLTDAQVKVWFQNRRMKWRHSK. 2 stretches are compositionally biased toward basic and acidic residues: residues 334–349 and 363–372; these read SKEA…EAGE and DERSPSRSEG. Residues 373–383 show a composition bias toward acidic residues; sequence EAESESSDSES. The segment covering 390-401 has biased composition (basic and acidic residues); that stretch reads DTERTEGSERSL. Residues 422-432 are compositionally biased toward gly residues; the sequence is GSGGSSGGGGN. Low complexity predominate over residues 433–454; that stretch reads SFSFSSASSLSSSSTSAGCASS.

This sequence belongs to the H2.0 homeobox family. In terms of tissue distribution, low level in normal B and T-cells, high level in activated lymphocytes and monocytes. Also found in thymus, tonsil, bone marrow, developing vessels, and fetal brain.

It localises to the nucleus. Its function is as follows. Transcription factor required for TBX21/T-bet-dependent maturation of Th1 cells as well as maintenance of Th1-specific gene expression. Involved in embryogenesis and hematopoiesis. The chain is H2.0-like homeobox protein (HLX) from Homo sapiens (Human).